The following is a 542-amino-acid chain: MAELDQLPDESSSAKALVSLKEGSLSNTWNEKYSSLQKTPVWKGRNTSPAVEMPFRNSKRSRLFSDEDDRQINTRSPKRNQRVAMVPQKFTATMSTPDKKASQKIGFRLRNLLKLPKAHKWCIYEWFYSNIDKPLFEGDNDFCVCLKESFPNLKTRKLTRVEWGKIRRLMGKPRRCSSAFFEEERSALKQKRQKIRLLQQRKVADVSQFKDLPDEIPLPLVIGTKVTARLRGVHDGLFTGQIDAVDTLNATYRVTFDRTGLGTHTIPDYEVLSNEPHETMPIAAFGQKQRPSRFFMTPPRLHYTPPLQSPIMDNDPLLGQSPWRSKISGSDTETLGGFPVEFLIQVTRLSKILMIKKEHIKKLREMNTDAEKLKSYSMPISIEFQRRYATIVLELEQLNKDLNKVLHKVQQYCYELAPDQGLQPADQPTDMRRRCEEEAQEIVRHANSSTGQPCVENENLTDLISRLTAILLQIKCLAEGGDLNSFEFKSLTDSLNDIKSTIDASNISCFQNNVEIHVAHIQSGLSQMGNLHAFAANNTNRD.

Alanine 2 is subject to N-acetylalanine. The sufficient for interaction with RB1 stretch occupies residues 2–296 (AELDQLPDES…QKQRPSRFFM (295 aa)). A Glycyl lysine isopeptide (Lys-Gly) (interchain with G-Cter in SUMO2) cross-link involves residue lysine 21. Phosphoserine is present on residues serine 65 and serine 95. 2 positions are modified to phosphothreonine: threonine 96 and threonine 304. Serine 309 and serine 321 each carry phosphoserine. Positions 355–413 (IKKEHIKKLREMNTDAEKLKSYSMPISIEFQRRYATIVLELEQLNKDLNKVLHKVQQYC) form a coiled coil.

It belongs to the lin-9 family. Component of the DREAM complex (also named LINC complex) at least composed of E2F4, E2F5, LIN9, LIN37, LIN52, LIN54, MYBL1, MYBL2, RBL1, RBL2, RBBP4, TFDP1 and TFDP2. The complex exists in quiescent cells where it represses cell cycle-dependent genes. It dissociates in S phase when LIN9, LIN37, LIN52 and LIN54 form a subcomplex that binds to MYBL2. Interacts with RB1.

The protein resides in the nucleus. It is found in the nucleoplasm. Its function is as follows. Acts as a tumor suppressor. Inhibits DNA synthesis. Its ability to inhibit oncogenic transformation is mediated through its association with RB1. Plays a role in the expression of genes required for the G1/S transition. The sequence is that of Protein lin-9 homolog (LIN9) from Macaca fascicularis (Crab-eating macaque).